A 456-amino-acid polypeptide reads, in one-letter code: Phytase A (456 aa).

An N-terminal signal peptide occupies residues 1–24 (MSSMASVLFAALAISGVQVTPSRG). Q37, Y38, R68, H69, R72, T75, and R152 together coordinate 1D-myo-inositol hexakisphosphate. Disulfide bonds link C58/C396, C197/C450, C246/C264, and C421/C429. Catalysis depends on H69, which acts as the Nucleophile. K283 contacts 1D-myo-inositol hexakisphosphate. The N-linked (GlcNAc...) asparagine glycan is linked to N317. The 1D-myo-inositol hexakisphosphate site is built by H343 and D344. N-linked (GlcNAc...) asparagine glycosylation is present at N358.

This sequence belongs to the histidine acid phosphatase family. In terms of assembly, monomer.

It localises to the secreted. It carries out the reaction 1D-myo-inositol hexakisphosphate + H2O = 1D-myo-inositol 1,2,4,5,6-pentakisphosphate + phosphate. The enzyme catalyses 1D-myo-inositol 1,2,4,5,6-pentakisphosphate + H2O = 1D-myo-inositol 1,2,5,6-tetrakisphosphate + phosphate. It catalyses the reaction 1D-myo-inositol 1,2,5,6-tetrakisphosphate + H2O = 1D-myo-inositol 1,2,6-trisphosphate + phosphate. The catalysed reaction is 1D-myo-inositol 1,2,6-trisphosphate + H2O = 1D-myo-inositol 1,2-bisphosphate + phosphate. It carries out the reaction 1D-myo-inositol 1,2-bisphosphate + H2O = 1D-myo-inositol 2-phosphate + phosphate. In terms of biological role, catalyzes the phosphate monoester hydrolysis of phytic acid (myo-inositol hexakisphosphate), which results in the stepwise formation of myo-inositol pentakis-, tetrakis-, tris-, bis-, and monophosphates, as well as the liberation of inorganic phosphate. Myo-inositol 2-monophosphate is the end product. This chain is Phytase A, found in Arthroderma benhamiae (strain ATCC MYA-4681 / CBS 112371) (Trichophyton mentagrophytes).